Consider the following 554-residue polypeptide: Phosphoglucomutase (554 aa).

Alpha-D-glucose 1,6-bisphosphate is bound at residue Arg21. Thr111 is subject to Phosphothreonine. Residue Ser113 coordinates alpha-D-glucose 1,6-bisphosphate. Ser113 acts as the Phosphoserine intermediate in catalysis. Residues Ser113, Asp278, Asp280, and Asp282 each coordinate Mg(2+). Ser113 is modified (phosphoserine). 6 residues coordinate alpha-D-glucose 1,6-bisphosphate: Asp282, Arg283, Thr346, Glu365, Ser367, and Lys378.

This sequence belongs to the phosphohexose mutase family. Monomer. It depends on Mg(2+) as a cofactor.

It localises to the cytoplasm. The protein resides in the nucleus. It carries out the reaction alpha-D-glucose 1-phosphate = alpha-D-glucose 6-phosphate. The enzyme catalyses O-phospho-L-seryl-[protein] + alpha-D-glucose 1-phosphate = alpha-D-glucose 1,6-bisphosphate + L-seryl-[protein]. The catalysed reaction is alpha-D-glucose 1,6-bisphosphate + L-seryl-[protein] = O-phospho-L-seryl-[protein] + alpha-D-glucose 6-phosphate. In terms of biological role, catalyzes the reversible isomerization of alpha-D-glucose 1-phosphate to alpha-D-glucose 6-phosphate. The mechanism proceeds via the intermediate compound alpha-D-glucose 1,6-bisphosphate. Key enzyme in hexose metabolism. The reverse reaction is an essential step for biosynthesis because glucose 1-phosphate is the starting point for the synthesis of UDP-glucose, which acts as a precursor for the synthesis of oligosaccharides and trehalose. The sequence is that of Phosphoglucomutase from Schizosaccharomyces pombe (strain 972 / ATCC 24843) (Fission yeast).